The sequence spans 2118 residues: Cilia- and flagella-associated protein 65 (2118 aa).

The helical transmembrane segment at 6–26 (GSLRALLLAAAAAAAAAAGAV) threads the bilayer. An MSP domain is found at 615–736 (FLHSNPEFGP…HTPRLTTDLP (122 aa)). Disordered stretches follow at residues 1007 to 1029 (APLL…LDAG), 1764 to 1909 (SGGS…DDFA), and 1924 to 1958 (AGGG…APPR). Gly residues predominate over residues 1825-1834 (GGAGGAPGGD). The span at 1840–1849 (RPGTPSMTAA) shows a compositional bias: low complexity. Residues 1850–1859 (AHHHHHHPRH) are compositionally biased toward basic residues. Low complexity-rich tracts occupy residues 1892 to 1902 (SISGAPDPDSA) and 1936 to 1949 (PGGS…ELAP). The stretch at 2016–2045 (AVRAAAEAARAEAEARAAAEAATKAAAEAE) forms a coiled coil.

It belongs to the CFAP65 family.

The protein resides in the cell projection. It is found in the cilium. Its subcellular location is the flagellum membrane. The protein localises to the cytoplasm. May play a role in flagellar formation and mobility. In Chlamydomonas reinhardtii (Chlamydomonas smithii), this protein is Cilia- and flagella-associated protein 65.